Consider the following 342-residue polypeptide: MNPQKIAVLGPGSWGTGLSQVLNDNGHEVRIWGNNLEQMAEINEKHTNTRYFKDVVLDEKIKAYSRLDLALENVDAILFVVPTKVTRLVAKQVAQVLKHKVHILHASKGLEQGTHDRISTILEEEIPAQLRGEIVVVSGPSHAEETIVRDITLISAASNDHDEAKYAQSIFSNDYFRLYTNTDVIGVETAGALKNIIAVGAGALHGLGFGDNAKAAIITRGLAEITRLGVAMGAEPLTYSGLSGVGDLIVTGTSIHSRNWRAGDALGRGEKIADIEKNMGMVIEGVSTTKAAYELAQRLEIDMPITETIYKVLYENLDAKSGILDIMRRETRAENEFININK.

3 residues coordinate NADPH: S13, W14, and K108. Positions 108, 139, and 141 each coordinate sn-glycerol 3-phosphate. A143 provides a ligand contact to NADPH. Residues K194, D247, S257, R258, and N259 each contribute to the sn-glycerol 3-phosphate site. K194 (proton acceptor) is an active-site residue. R258 is an NADPH binding site. 2 residues coordinate NADPH: V282 and E284.

This sequence belongs to the NAD-dependent glycerol-3-phosphate dehydrogenase family.

The protein resides in the cytoplasm. The catalysed reaction is sn-glycerol 3-phosphate + NAD(+) = dihydroxyacetone phosphate + NADH + H(+). It carries out the reaction sn-glycerol 3-phosphate + NADP(+) = dihydroxyacetone phosphate + NADPH + H(+). Its pathway is membrane lipid metabolism; glycerophospholipid metabolism. In terms of biological role, catalyzes the reduction of the glycolytic intermediate dihydroxyacetone phosphate (DHAP) to sn-glycerol 3-phosphate (G3P), the key precursor for phospholipid synthesis. This is Glycerol-3-phosphate dehydrogenase [NAD(P)+] from Lactococcus lactis subsp. cremoris (strain SK11).